The chain runs to 131 residues: Small ribosomal subunit protein uS8 (131 aa).

This sequence belongs to the universal ribosomal protein uS8 family. As to quaternary structure, part of the 30S ribosomal subunit. Contacts proteins S5 and S12.

One of the primary rRNA binding proteins, it binds directly to 16S rRNA central domain where it helps coordinate assembly of the platform of the 30S subunit. This is Small ribosomal subunit protein uS8 from Acholeplasma laidlawii (strain PG-8A).